Here is a 458-residue protein sequence, read N- to C-terminus: Argininosuccinate lyase (458 aa).

It belongs to the lyase 1 family. Argininosuccinate lyase subfamily.

The protein resides in the cytoplasm. The enzyme catalyses 2-(N(omega)-L-arginino)succinate = fumarate + L-arginine. It participates in amino-acid biosynthesis; L-arginine biosynthesis; L-arginine from L-ornithine and carbamoyl phosphate: step 3/3. In Salmonella paratyphi B (strain ATCC BAA-1250 / SPB7), this protein is Argininosuccinate lyase.